Consider the following 130-residue polypeptide: HTH-type transcriptional repressor YtrA (130 aa).

The region spanning 10-78 (TPIYEQIIQQ…RGRGTYISEN (69 aa)) is the HTH gntR-type domain. A DNA-binding region (H-T-H motif) is located at residues 38–57 (VRELATIIIANPNTVSKAYK).

Functionally, negatively regulates ABC transporter complex ytrBCDEF that plays a role in acetoin utilization during stationary phase and sporulation. The protein is HTH-type transcriptional repressor YtrA (ytrA) of Bacillus subtilis (strain 168).